We begin with the raw amino-acid sequence, 135 residues long: Transcription antitermination protein NusB (135 aa).

The protein belongs to the NusB family.

Involved in transcription antitermination. Required for transcription of ribosomal RNA (rRNA) genes. Binds specifically to the boxA antiterminator sequence of the ribosomal RNA (rrn) operons. This is Transcription antitermination protein NusB from Clostridium perfringens (strain ATCC 13124 / DSM 756 / JCM 1290 / NCIMB 6125 / NCTC 8237 / Type A).